Here is a 305-residue protein sequence, read N- to C-terminus: UDP-3-O-acyl-N-acetylglucosamine deacetylase (305 aa).

Residues His79, His238, and Asp242 each coordinate Zn(2+). The Proton donor role is filled by His265.

This sequence belongs to the LpxC family. It depends on Zn(2+) as a cofactor.

The enzyme catalyses a UDP-3-O-[(3R)-3-hydroxyacyl]-N-acetyl-alpha-D-glucosamine + H2O = a UDP-3-O-[(3R)-3-hydroxyacyl]-alpha-D-glucosamine + acetate. It functions in the pathway glycolipid biosynthesis; lipid IV(A) biosynthesis; lipid IV(A) from (3R)-3-hydroxytetradecanoyl-[acyl-carrier-protein] and UDP-N-acetyl-alpha-D-glucosamine: step 2/6. Functionally, catalyzes the hydrolysis of UDP-3-O-myristoyl-N-acetylglucosamine to form UDP-3-O-myristoylglucosamine and acetate, the committed step in lipid A biosynthesis. This chain is UDP-3-O-acyl-N-acetylglucosamine deacetylase, found in Haemophilus influenzae (strain PittEE).